Consider the following 523-residue polypeptide: 2-isopropylmalate synthase (523 aa).

Residues 5–267 (VIIFDTTLRD…HTNINHHEIW (263 aa)) form the Pyruvate carboxyltransferase domain. 4 residues coordinate Mn(2+): Asp-14, His-202, His-204, and Asn-238. The segment at 392 to 523 (RLDYFSVQSG…QNKENNKETV (132 aa)) is regulatory domain.

It belongs to the alpha-IPM synthase/homocitrate synthase family. LeuA type 1 subfamily. Homodimer. Mn(2+) serves as cofactor.

The protein localises to the cytoplasm. The enzyme catalyses 3-methyl-2-oxobutanoate + acetyl-CoA + H2O = (2S)-2-isopropylmalate + CoA + H(+). Its pathway is amino-acid biosynthesis; L-leucine biosynthesis; L-leucine from 3-methyl-2-oxobutanoate: step 1/4. Its function is as follows. Catalyzes the condensation of the acetyl group of acetyl-CoA with 3-methyl-2-oxobutanoate (2-ketoisovalerate) to form 3-carboxy-3-hydroxy-4-methylpentanoate (2-isopropylmalate). The sequence is that of 2-isopropylmalate synthase from Salmonella paratyphi A (strain ATCC 9150 / SARB42).